The primary structure comprises 556 residues: Probable zinc metalloprotease EGY2, chloroplastic (556 aa).

Residues 1-64 (MNLAVASFRG…VFRKRETLVR (64 aa)) constitute a chloroplast transit peptide. Residues 63–133 (VRVTETQTEP…DGDKLEVSSG (71 aa)) are disordered. 7 helical membrane-spanning segments follow: residues 267–287 (AVPE…TLFL), 311–331 (LPGA…HILV), 336–356 (GIKL…FGAI), 374–394 (AAGP…GLFV), 437–457 (PLVI…IPAG), 484–504 (LLGL…LIFF), and 527–547 (LGIL…FAFT).

It belongs to the peptidase M50B family.

The protein localises to the plastid. It localises to the chloroplast membrane. In terms of biological role, probable membrane-associated metalloprotease that may be involved in chloroplast development. This Arabidopsis thaliana (Mouse-ear cress) protein is Probable zinc metalloprotease EGY2, chloroplastic (EGY2).